The primary structure comprises 303 residues: uncharacterized protein (303 aa).

A Phosphoserine modification is found at Ser-63.

The protein belongs to the HAD-like hydrolase superfamily.

The protein localises to the cytoplasm. Its subcellular location is the nucleus. This is an uncharacterized protein from Schizosaccharomyces pombe (strain 972 / ATCC 24843) (Fission yeast).